Reading from the N-terminus, the 538-residue chain is Putative amidase kk1C (538 aa).

The interval 1 to 32 (MTEPTWKTVASEKQQQRESKIPSEWQIPKSSH) is disordered. Catalysis depends on charge relay system residues lysine 134 and serine 209. The Acyl-ester intermediate role is filled by serine 233.

The protein belongs to the amidase family.

The enzyme catalyses a monocarboxylic acid amide + H2O = a monocarboxylate + NH4(+). The protein operates within secondary metabolite biosynthesis. In terms of biological role, putative amidase; part of the gene cluster that mediates the biosynthesis of KK-1, a novel cyclic depsipeptide with 10 residues which is a promising active compound with high activity against many plant pathogens, especially Botrytis cinerea. The role of kk1C in KK-1 biosynthesis has still to be determined. The nonribosomal peptide synthetase (NRPS) kk1B catalyzes the elongation and cyclization of the decapeptide chain composed of 1 D-lactic acid residue (D-Lac), 1 pipecolic acid residue (Pip), 1 aspartic acid residue (Asp), 1 isoleucine residue (Ile), 1 glycine residue (Gly), 1 tyrosine residue (Tyr) and 4 valine residues (Val). The Asp, Ile and 3 Val residues are N-methylated by the 5 methyltransferase domains from the NRPS (found in modules 3, 5, 6, 7 and 9), whereas the Tyr residue is O-methylated by the cluster encoded O-methyltransferase kk1A. The thioesterase kk1J is likely to be involved in the corrective mechanism of peptide chain synthesis. The D-lactate dehydrogenase kk1H is involved in the synthesis of D-lactic acid from pyruvic acid, which is recognized by the A domain of the first kk1B module. The pyrroline-5-carboxylate reductase kk1I is involved in the synthesis of the L-pipecolic acid residue of KK-1 from delta-1-pyrroline-5-carboxylate (P5C), a metabolic intermediate of lysine. It is still unclear how kk1C and kk1D are involved in the production of KK-1. This is Putative amidase kk1C from Curvularia clavata.